The primary structure comprises 906 residues: Protein translocase subunit SecA (906 aa).

ATP contacts are provided by residues Q90, 108 to 112 (GEGKT), and D503. The tract at residues 845-882 (TAAEAPASVPQPQAAVAPQPAPELVGADNGESQPQAWG) is disordered. Residues 846–862 (AAEAPASVPQPQAAVAP) are compositionally biased toward low complexity. Zn(2+)-binding residues include C890, C892, C901, and H902.

This sequence belongs to the SecA family. In terms of assembly, monomer and homodimer. Part of the essential Sec protein translocation apparatus which comprises SecA, SecYEG and auxiliary proteins SecDF-YajC and YidC. Zn(2+) is required as a cofactor.

Its subcellular location is the cell inner membrane. It is found in the cytoplasm. It catalyses the reaction ATP + H2O + cellular proteinSide 1 = ADP + phosphate + cellular proteinSide 2.. In terms of biological role, part of the Sec protein translocase complex. Interacts with the SecYEG preprotein conducting channel. Has a central role in coupling the hydrolysis of ATP to the transfer of proteins into and across the cell membrane, serving both as a receptor for the preprotein-SecB complex and as an ATP-driven molecular motor driving the stepwise translocation of polypeptide chains across the membrane. This Cereibacter sphaeroides (strain ATCC 17025 / ATH 2.4.3) (Rhodobacter sphaeroides) protein is Protein translocase subunit SecA.